We begin with the raw amino-acid sequence, 655 residues long: NAD(P)H-quinone oxidoreductase subunit 5, chloroplastic (655 aa).

The next 16 helical transmembrane spans lie at 7-27 (YAWL…LGLI), 40-60 (FAFF…SILI), 89-109 (IDPL…LVMI), 124-144 (FFAY…SPNL), 147-167 (IYVF…FWFT), 185-205 (GDFG…SFEF), 226-246 (HPVQ…GPMA), 265-285 (TPIS…FLVA), 296-316 (IVMG…AIIA), 334-354 (LGYM…FHLI), 361-381 (ALLF…VGFN), 402-422 (AITF…ACFW), 434-454 (AQPI…FYMF), 488-508 (ILIP…VGTP), 533-553 (LSMS…ASLI), and 635-655 (QSYV…SQGF).

Belongs to the complex I subunit 5 family. NDH is composed of at least 16 different subunits, 5 of which are encoded in the nucleus.

It is found in the plastid. Its subcellular location is the chloroplast thylakoid membrane. The enzyme catalyses a plastoquinone + NADH + (n+1) H(+)(in) = a plastoquinol + NAD(+) + n H(+)(out). It catalyses the reaction a plastoquinone + NADPH + (n+1) H(+)(in) = a plastoquinol + NADP(+) + n H(+)(out). Its function is as follows. NDH shuttles electrons from NAD(P)H:plastoquinone, via FMN and iron-sulfur (Fe-S) centers, to quinones in the photosynthetic chain and possibly in a chloroplast respiratory chain. The immediate electron acceptor for the enzyme in this species is believed to be plastoquinone. Couples the redox reaction to proton translocation, and thus conserves the redox energy in a proton gradient. This is NAD(P)H-quinone oxidoreductase subunit 5, chloroplastic (ndhF) from Chlorokybus atmophyticus (Soil alga).